The sequence spans 1054 residues: Kinesin-like protein KIN-7G (1054 aa).

A Kinesin motor domain is found at 17–341 (KIFVSVRLRP…LLFASCAKEV (325 aa)). Residue 105 to 112 (GQTSSGKT) participates in ATP binding. 2 coiled-coil regions span residues 350 to 425 (VMSD…IGEA) and 611 to 640 (TETA…VSSV). 2 disordered regions span residues 600–648 (CEPE…KEKS) and 740–760 (ERAE…PKHI). The segment covering 613–631 (TAEEKEEKEETEEKEEEEE) has biased composition (acidic residues).

Belongs to the TRAFAC class myosin-kinesin ATPase superfamily. Kinesin family. KIN-7 subfamily.

This Arabidopsis thaliana (Mouse-ear cress) protein is Kinesin-like protein KIN-7G.